The chain runs to 487 residues: mRNA cleavage and polyadenylation factor CLP1 (487 aa).

ATP contacts are provided by residues glutamate 19, lysine 59, and 134-139; that span reads NSGKTT.

Belongs to the Clp1 family. Clp1 subfamily. As to quaternary structure, component of a pre-mRNA cleavage factor complex. Interacts directly with PCF11.

Its subcellular location is the nucleus. Required for endonucleolytic cleavage during polyadenylation-dependent pre-mRNA 3'-end formation. In Laccaria bicolor (strain S238N-H82 / ATCC MYA-4686) (Bicoloured deceiver), this protein is mRNA cleavage and polyadenylation factor CLP1.